A 183-amino-acid chain; its full sequence is MKSVSVSRRYATALMLIGKEDGNTDQYRKELDDIVQFFDANPELEQTISNPLYDKNDRKNVLIAVLDKGGLSKVMKSFLILLFAKARISFIREVCEFYYSLADELKGVVHATLVSATELSSDAVEKIRAGLATRIGKDIVLDVEQDPSLLGGVVTKIGDLVLDGSVKTQLFNMRETLKRGESA.

Belongs to the ATPase delta chain family. As to quaternary structure, F-type ATPases have 2 components, F(1) - the catalytic core - and F(0) - the membrane proton channel. F(1) has five subunits: alpha(3), beta(3), gamma(1), delta(1), epsilon(1). F(0) has three main subunits: a(1), b(2) and c(10-14). The alpha and beta chains form an alternating ring which encloses part of the gamma chain. F(1) is attached to F(0) by a central stalk formed by the gamma and epsilon chains, while a peripheral stalk is formed by the delta and b chains.

The protein localises to the cell inner membrane. In terms of biological role, f(1)F(0) ATP synthase produces ATP from ADP in the presence of a proton or sodium gradient. F-type ATPases consist of two structural domains, F(1) containing the extramembraneous catalytic core and F(0) containing the membrane proton channel, linked together by a central stalk and a peripheral stalk. During catalysis, ATP synthesis in the catalytic domain of F(1) is coupled via a rotary mechanism of the central stalk subunits to proton translocation. This protein is part of the stalk that links CF(0) to CF(1). It either transmits conformational changes from CF(0) to CF(1) or is implicated in proton conduction. The polypeptide is ATP synthase subunit delta (Desulforapulum autotrophicum (strain ATCC 43914 / DSM 3382 / VKM B-1955 / HRM2) (Desulfobacterium autotrophicum)).